Consider the following 184-residue polypeptide: Photosystem I assembly protein Ycf4 (184 aa).

Transmembrane regions (helical) follow at residues 21–43 and 63–85; these read NFCW…ISSY and GLVM…CAIS.

This sequence belongs to the Ycf4 family.

The protein localises to the plastid. The protein resides in the chloroplast thylakoid membrane. Its function is as follows. Seems to be required for the assembly of the photosystem I complex. This Spinacia oleracea (Spinach) protein is Photosystem I assembly protein Ycf4.